The chain runs to 539 residues: 2,3-dihydroxybenzoate-AMP ligase (539 aa).

An ATP-binding site is contributed by Gly191. Residues 234–235 (HN) and Ser240 each bind substrate. Residues Gly307, Val329, Asp413, Arg428, and Lys519 each contribute to the ATP site. Lys519 is a binding site for substrate.

It belongs to the ATP-dependent AMP-binding enzyme family.

Its subcellular location is the cytoplasm. The enzyme catalyses 2,3-dihydroxybenzoate + holo-[ACP] + ATP = 2,3-dihydroxybenzoyl-[ACP] + AMP + diphosphate. It functions in the pathway siderophore biosynthesis; bacillibactin biosynthesis. Functionally, involved in the biosynthesis of the catecholic siderophore bacillibactin. Catalyzes the activation of the carboxylate group of 2,3-dihydroxy-benzoate (DHB), via ATP-dependent PPi exchange reactions, to the acyladenylate. This chain is 2,3-dihydroxybenzoate-AMP ligase, found in Bacillus subtilis (strain 168).